The primary structure comprises 712 residues: Phosphoribosylformylglycinamidine synthase subunit PurL (712 aa).

The active site involves H32. Y35 serves as a coordination point for ATP. E76 serves as a coordination point for Mg(2+). Substrate contacts are provided by residues 77–80 (SHNH) and R99. H78 functions as the Proton acceptor in the catalytic mechanism. A Mg(2+)-binding site is contributed by D100. Residue Q223 participates in substrate binding. D251 is a Mg(2+) binding site. 295–297 (ESQ) serves as a coordination point for substrate. ATP-binding residues include D470 and G507. Residue N508 participates in Mg(2+) binding. S510 provides a ligand contact to substrate.

This sequence belongs to the FGAMS family. In terms of assembly, monomer. Part of the FGAM synthase complex composed of 1 PurL, 1 PurQ and 2 PurS subunits.

Its subcellular location is the cytoplasm. It catalyses the reaction N(2)-formyl-N(1)-(5-phospho-beta-D-ribosyl)glycinamide + L-glutamine + ATP + H2O = 2-formamido-N(1)-(5-O-phospho-beta-D-ribosyl)acetamidine + L-glutamate + ADP + phosphate + H(+). The protein operates within purine metabolism; IMP biosynthesis via de novo pathway; 5-amino-1-(5-phospho-D-ribosyl)imidazole from N(2)-formyl-N(1)-(5-phospho-D-ribosyl)glycinamide: step 1/2. Functionally, part of the phosphoribosylformylglycinamidine synthase complex involved in the purines biosynthetic pathway. Catalyzes the ATP-dependent conversion of formylglycinamide ribonucleotide (FGAR) and glutamine to yield formylglycinamidine ribonucleotide (FGAM) and glutamate. The FGAM synthase complex is composed of three subunits. PurQ produces an ammonia molecule by converting glutamine to glutamate. PurL transfers the ammonia molecule to FGAR to form FGAM in an ATP-dependent manner. PurS interacts with PurQ and PurL and is thought to assist in the transfer of the ammonia molecule from PurQ to PurL. The polypeptide is Phosphoribosylformylglycinamidine synthase subunit PurL (Thermococcus gammatolerans (strain DSM 15229 / JCM 11827 / EJ3)).